The chain runs to 276 residues: Undecaprenyl-diphosphatase 2 (276 aa).

A run of 8 helical transmembrane segments spans residues 4–24 (IEAL…VSSL), 44–64 (DFLP…LIYF), 87–107 (ARLM…GLLL), 114–134 (LFAS…LLLW), 150–170 (LSFA…LPGF), 193–213 (FSFL…IPKL), 225–245 (LLLA…WFLM), and 256–276 (LRPF…FKLV).

Belongs to the UppP family.

It localises to the cell inner membrane. It carries out the reaction di-trans,octa-cis-undecaprenyl diphosphate + H2O = di-trans,octa-cis-undecaprenyl phosphate + phosphate + H(+). In terms of biological role, catalyzes the dephosphorylation of undecaprenyl diphosphate (UPP). Confers resistance to bacitracin. The sequence is that of Undecaprenyl-diphosphatase 2 from Chromobacterium violaceum (strain ATCC 12472 / DSM 30191 / JCM 1249 / CCUG 213 / NBRC 12614 / NCIMB 9131 / NCTC 9757 / MK).